A 181-amino-acid polypeptide reads, in one-letter code: Adenine phosphoribosyltransferase (181 aa).

This sequence belongs to the purine/pyrimidine phosphoribosyltransferase family. In terms of assembly, homodimer.

It localises to the cytoplasm. The catalysed reaction is AMP + diphosphate = 5-phospho-alpha-D-ribose 1-diphosphate + adenine. It functions in the pathway purine metabolism; AMP biosynthesis via salvage pathway; AMP from adenine: step 1/1. Functionally, catalyzes a salvage reaction resulting in the formation of AMP, that is energically less costly than de novo synthesis. The chain is Adenine phosphoribosyltransferase from Brucella anthropi (strain ATCC 49188 / DSM 6882 / CCUG 24695 / JCM 21032 / LMG 3331 / NBRC 15819 / NCTC 12168 / Alc 37) (Ochrobactrum anthropi).